A 182-amino-acid chain; its full sequence is Ribosome-recycling factor (182 aa).

It belongs to the RRF family.

Its subcellular location is the cytoplasm. Its function is as follows. Responsible for the release of ribosomes from messenger RNA at the termination of protein biosynthesis. May increase the efficiency of translation by recycling ribosomes from one round of translation to another. This Synechococcus sp. (strain CC9605) protein is Ribosome-recycling factor.